A 539-amino-acid polypeptide reads, in one-letter code: Chaperonin GroEL (539 aa).

Residues 29–32, 86–90, Gly413, 479–481, and Asp495 each bind ATP; these read TLGP, DGTTT, and DAL.

It belongs to the chaperonin (HSP60) family. In terms of assembly, forms a cylinder of 14 subunits composed of two heptameric rings stacked back-to-back. Interacts with the co-chaperonin GroES.

It is found in the cytoplasm. It catalyses the reaction ATP + H2O + a folded polypeptide = ADP + phosphate + an unfolded polypeptide.. Together with its co-chaperonin GroES, plays an essential role in assisting protein folding. The GroEL-GroES system forms a nano-cage that allows encapsulation of the non-native substrate proteins and provides a physical environment optimized to promote and accelerate protein folding. The chain is Chaperonin GroEL from Thermosipho africanus (strain TCF52B).